The primary structure comprises 342 residues: Anthranilate phosphoribosyltransferase (342 aa).

Residues Gly81, 84-85 (GD), Thr89, 91-94 (NIST), 109-117 (KHGNRALSS), and Thr121 contribute to the 5-phospho-alpha-D-ribose 1-diphosphate site. Gly81 contributes to the anthranilate binding site. Ser93 contributes to the Mg(2+) binding site. Position 112 (Asn112) interacts with anthranilate. Arg167 contacts anthranilate. 2 residues coordinate Mg(2+): Asp225 and Glu226.

This sequence belongs to the anthranilate phosphoribosyltransferase family. In terms of assembly, homodimer. Mg(2+) is required as a cofactor.

The enzyme catalyses N-(5-phospho-beta-D-ribosyl)anthranilate + diphosphate = 5-phospho-alpha-D-ribose 1-diphosphate + anthranilate. It functions in the pathway amino-acid biosynthesis; L-tryptophan biosynthesis; L-tryptophan from chorismate: step 2/5. Functionally, catalyzes the transfer of the phosphoribosyl group of 5-phosphorylribose-1-pyrophosphate (PRPP) to anthranilate to yield N-(5'-phosphoribosyl)-anthranilate (PRA). This chain is Anthranilate phosphoribosyltransferase, found in Agrobacterium fabrum (strain C58 / ATCC 33970) (Agrobacterium tumefaciens (strain C58)).